Reading from the N-terminus, the 1206-residue chain is Methionine synthase (1206 aa).

Residues M1–V314 enclose the Hcy-binding domain. Residues C233, C299, and C300 each contribute to the Zn(2+) site. A Pterin-binding domain is found at V350–L609. Positions R642–G735 constitute a B12-binding N-terminal domain. The B12-binding domain maps to K740–P877. Methylcob(III)alamin contacts are provided by residues G750–D754, H753, S798, and A856. The interval E873 to P925 is disordered. Basic and acidic residues predominate over residues E886–A897. The span at R898–V907 shows a compositional bias: basic residues. The AdoMet activation domain occupies V907–V1206. The segment covering K910 to V924 has biased composition (basic and acidic residues). S-adenosyl-L-methionine contacts are provided by residues D954, R1149, and Y1203–F1204.

This sequence belongs to the vitamin-B12 dependent methionine synthase family. Requires methylcob(III)alamin as cofactor. Zn(2+) serves as cofactor.

The catalysed reaction is (6S)-5-methyl-5,6,7,8-tetrahydrofolate + L-homocysteine = (6S)-5,6,7,8-tetrahydrofolate + L-methionine. The protein operates within amino-acid biosynthesis; L-methionine biosynthesis via de novo pathway; L-methionine from L-homocysteine (MetH route): step 1/1. Functionally, catalyzes the transfer of a methyl group from methyl-cobalamin to homocysteine, yielding enzyme-bound cob(I)alamin and methionine. Subsequently, remethylates the cofactor using methyltetrahydrofolate. The polypeptide is Methionine synthase (metH) (Mycobacterium leprae (strain TN)).